A 416-amino-acid chain; its full sequence is Phosphoribosylamine--glycine ligase (416 aa).

In terms of domain architecture, ATP-grasp spans 105 to 310 (KSFLKKYRIK…PLELILAATQ (206 aa)). 131–192 (IYSLTPPIVV…EEFLDGYELS (62 aa)) serves as a coordination point for ATP. Mg(2+) is bound by residues Glu281 and Asn283.

The protein belongs to the GARS family. Requires Mg(2+) as cofactor. It depends on Mn(2+) as a cofactor.

It carries out the reaction 5-phospho-beta-D-ribosylamine + glycine + ATP = N(1)-(5-phospho-beta-D-ribosyl)glycinamide + ADP + phosphate + H(+). It functions in the pathway purine metabolism; IMP biosynthesis via de novo pathway; N(1)-(5-phospho-D-ribosyl)glycinamide from 5-phospho-alpha-D-ribose 1-diphosphate: step 2/2. The polypeptide is Phosphoribosylamine--glycine ligase (Campylobacter jejuni subsp. jejuni serotype O:2 (strain ATCC 700819 / NCTC 11168)).